A 99-amino-acid chain; its full sequence is DNA-directed RNA polymerase subunit omega (99 aa).

The protein belongs to the RNA polymerase subunit omega family. As to quaternary structure, the RNAP catalytic core consists of 2 alpha, 1 beta, 1 beta' and 1 omega subunit. When a sigma factor is associated with the core the holoenzyme is formed, which can initiate transcription.

It carries out the reaction RNA(n) + a ribonucleoside 5'-triphosphate = RNA(n+1) + diphosphate. In terms of biological role, promotes RNA polymerase assembly. Latches the N- and C-terminal regions of the beta' subunit thereby facilitating its interaction with the beta and alpha subunits. The sequence is that of DNA-directed RNA polymerase subunit omega from Xylella fastidiosa (strain Temecula1 / ATCC 700964).